We begin with the raw amino-acid sequence, 223 residues long: Large ribosomal subunit protein uL3 (223 aa).

A disordered region spans residues 137–157; sequence GRASHGNSRSHNVPGSIGMAQ. Residue Gln-157 is modified to N5-methylglutamine.

The protein belongs to the universal ribosomal protein uL3 family. As to quaternary structure, part of the 50S ribosomal subunit. Forms a cluster with proteins L14 and L19. Post-translationally, methylated by PrmB.

One of the primary rRNA binding proteins, it binds directly near the 3'-end of the 23S rRNA, where it nucleates assembly of the 50S subunit. This Burkholderia pseudomallei (strain 1106a) protein is Large ribosomal subunit protein uL3.